Here is a 157-residue protein sequence, read N- to C-terminus: Cyclic pyranopterin monophosphate synthase (157 aa).

Substrate-binding positions include 74 to 76 and 112 to 113; these read MCH and ME. Asp-127 is a catalytic residue.

Belongs to the MoaC family. Homohexamer; trimer of dimers.

It catalyses the reaction (8S)-3',8-cyclo-7,8-dihydroguanosine 5'-triphosphate = cyclic pyranopterin phosphate + diphosphate. It functions in the pathway cofactor biosynthesis; molybdopterin biosynthesis. Its function is as follows. Catalyzes the conversion of (8S)-3',8-cyclo-7,8-dihydroguanosine 5'-triphosphate to cyclic pyranopterin monophosphate (cPMP). This chain is Cyclic pyranopterin monophosphate synthase, found in Campylobacter jejuni subsp. jejuni serotype O:23/36 (strain 81-176).